We begin with the raw amino-acid sequence, 208 residues long: MTDCSRNETGALAERVGQVARKTRETDIAVTWRLDGAGRADVDTGVPFFDHMLDQIARHSLTDLTARAVGDLEIDAHHTVEDTGIALGQALRRALGDGRSIRRYGSAFVPFDETLAFAAVDVSGRPYLVFDAALPAQKVGNFDTELAEEFFRALAMNAGITLHLKVHYGRNTHHMIEGLFKAFARALGDAVARDPRVLGVPSTKGALF.

Belongs to the imidazoleglycerol-phosphate dehydratase family.

The protein localises to the cytoplasm. It catalyses the reaction D-erythro-1-(imidazol-4-yl)glycerol 3-phosphate = 3-(imidazol-4-yl)-2-oxopropyl phosphate + H2O. It participates in amino-acid biosynthesis; L-histidine biosynthesis; L-histidine from 5-phospho-alpha-D-ribose 1-diphosphate: step 6/9. In Symbiobacterium thermophilum (strain DSM 24528 / JCM 14929 / IAM 14863 / T), this protein is Imidazoleglycerol-phosphate dehydratase.